The sequence spans 694 residues: Elongation factor G (694 aa).

Residues 8–285 (EKVRNIGIAA…AVVELLPSPQ (278 aa)) form the tr-type G domain. GTP is bound by residues 17 to 24 (AHIDAGKT), 81 to 85 (DTPGH), and 135 to 138 (NKMD).

This sequence belongs to the TRAFAC class translation factor GTPase superfamily. Classic translation factor GTPase family. EF-G/EF-2 subfamily.

It is found in the cytoplasm. In terms of biological role, catalyzes the GTP-dependent ribosomal translocation step during translation elongation. During this step, the ribosome changes from the pre-translocational (PRE) to the post-translocational (POST) state as the newly formed A-site-bound peptidyl-tRNA and P-site-bound deacylated tRNA move to the P and E sites, respectively. Catalyzes the coordinated movement of the two tRNA molecules, the mRNA and conformational changes in the ribosome. The protein is Elongation factor G (fusA) of Synechococcus sp. (strain ATCC 27144 / PCC 6301 / SAUG 1402/1) (Anacystis nidulans).